A 118-amino-acid polypeptide reads, in one-letter code: Large ribosomal subunit protein bL20 (118 aa).

Belongs to the bacterial ribosomal protein bL20 family.

Functionally, binds directly to 23S ribosomal RNA and is necessary for the in vitro assembly process of the 50S ribosomal subunit. It is not involved in the protein synthesizing functions of that subunit. This is Large ribosomal subunit protein bL20 from Proteus mirabilis (strain HI4320).